The chain runs to 322 residues: AA9 family lytic polysaccharide monooxygenase B (322 aa).

The N-terminal stretch at 1-17 (MFSKSIIAASLLTAVTA) is a signal peptide. H18 lines the Cu(2+) pocket. Residues N53 and N68 are each glycosylated (N-linked (GlcNAc...) asparagine). C56 and C173 are disulfide-bonded. H87 is a binding site for Cu(2+). N-linked (GlcNAc...) asparagine glycosylation is found at N121 and N133. Residues H159 and Q168 each coordinate O2. Y170 lines the Cu(2+) pocket. N-linked (GlcNAc...) asparagine glycosylation occurs at N197.

It belongs to the polysaccharide monooxygenase AA9 family. It depends on Cu(2+) as a cofactor.

Its subcellular location is the secreted. It catalyses the reaction [(1-&gt;4)-beta-D-glucosyl]n+m + reduced acceptor + O2 = 4-dehydro-beta-D-glucosyl-[(1-&gt;4)-beta-D-glucosyl]n-1 + [(1-&gt;4)-beta-D-glucosyl]m + acceptor + H2O.. Functionally, lytic polysaccharide monooxygenase (LPMO) that depolymerizes crystalline and amorphous polysaccharides via the oxidation of scissile alpha- or beta-(1-4)-glycosidic bonds, yielding C1 and C4 oxidation products. Catalysis by LPMOs requires the reduction of the active-site copper from Cu(II) to Cu(I) by a reducing agent and H(2)O(2) or O(2) as a cosubstrate. This chain is AA9 family lytic polysaccharide monooxygenase B, found in Botryotinia fuckeliana (strain B05.10) (Noble rot fungus).